The sequence spans 107 residues: Putative pterin-4-alpha-carbinolamine dehydratase (107 aa).

The protein belongs to the pterin-4-alpha-carbinolamine dehydratase family.

It catalyses the reaction (4aS,6R)-4a-hydroxy-L-erythro-5,6,7,8-tetrahydrobiopterin = (6R)-L-erythro-6,7-dihydrobiopterin + H2O. The polypeptide is Putative pterin-4-alpha-carbinolamine dehydratase (Paracoccus denitrificans (strain Pd 1222)).